Reading from the N-terminus, the 37-residue chain is Large ribosomal subunit protein bL36c (37 aa).

This sequence belongs to the bacterial ribosomal protein bL36 family.

Its subcellular location is the plastid. It localises to the chloroplast. The sequence is that of Large ribosomal subunit protein bL36c from Populus alba (White poplar).